The chain runs to 344 residues: Ion-translocating oxidoreductase complex subunit D (344 aa).

4 helical membrane passes run 23–43, 44–64, 77–99, and 120–140; these read LVLG…GPGT, LLNL…MLAL, SALV…WLTL, and PFNP…LEMT. Thr172 bears the FMN phosphoryl threonine mark. The next 5 membrane-spanning stretches (helical) occupy residues 198–218, 222–242, 252–272, 285–305, and 306–326; these read LGSA…LFLL, LFTW…SLLF, GSPL…FIVT, LVFG…GGYP, and DGMA…DYYT.

This sequence belongs to the NqrB/RnfD family. In terms of assembly, the complex is composed of six subunits: RnfA, RnfB, RnfC, RnfD, RnfE and RnfG. FMN serves as cofactor.

The protein resides in the cell inner membrane. In terms of biological role, part of a membrane-bound complex that couples electron transfer with translocation of ions across the membrane. The sequence is that of Ion-translocating oxidoreductase complex subunit D from Pseudomonas aeruginosa (strain LESB58).